We begin with the raw amino-acid sequence, 103 residues long: Flagellar hook-basal body complex protein FliE (103 aa).

The protein belongs to the FliE family.

Its subcellular location is the bacterial flagellum basal body. This chain is Flagellar hook-basal body complex protein FliE, found in Erwinia tasmaniensis (strain DSM 17950 / CFBP 7177 / CIP 109463 / NCPPB 4357 / Et1/99).